Consider the following 327-residue polypeptide: Protein EMSY-LIKE 1 (327 aa).

The ENT domain occupies 1-88 (METQIHQLEQ…HATIQPFDVL (88 aa)). The stretch at 32–58 (ESLITELRKELRVSDDEHRELLSRVNK) forms a coiled coil. Disordered regions lie at residues 206-257 (GHGS…SDDI) and 305-327 (ADTSDGEMDGDPPYSHDHPMPQG). The segment covering 214–232 (GNRRGQIHGGRGRGPRIHQ) has biased composition (basic residues). A coiled-coil region spans residues 281–306 (LELDKAKKMLKEHEQALIAAIARLAD). The residue at position 308 (serine 308) is a Phosphoserine. The segment covering 318 to 327 (YSHDHPMPQG) has biased composition (basic and acidic residues).

Isoform 1 interacts with EDM2 in nucleus.

The protein resides in the nucleus. In terms of biological role, probably involved in the regulation of chromatin states. Contributes to RPP7-mediated and basal immunity, especially against Hyaloperonospora arabidopsidis isolate Hiks1. Regulates negatively EDM2-dependent floral transition. The sequence is that of Protein EMSY-LIKE 1 from Arabidopsis thaliana (Mouse-ear cress).